The following is a 137-amino-acid chain: Large ribosomal subunit protein uL16 (137 aa).

The protein belongs to the universal ribosomal protein uL16 family. As to quaternary structure, part of the 50S ribosomal subunit.

In terms of biological role, binds 23S rRNA and is also seen to make contacts with the A and possibly P site tRNAs. The sequence is that of Large ribosomal subunit protein uL16 from Pseudomonas entomophila (strain L48).